The following is a 287-amino-acid chain: 4-hydroxybenzoate octaprenyltransferase (287 aa).

6 helical membrane-spanning segments follow: residues 30 to 50 (ALWI…FTVG), 89 to 109 (WEAV…ILPL), 133 to 153 (FFAI…PMAF), 158 to 178 (GHVP…SVAY), 199 to 221 (ALTF…LGIY), and 267 to 287 (NNWL…AGSF).

The protein belongs to the UbiA prenyltransferase family. Requires Mg(2+) as cofactor.

The protein localises to the cell inner membrane. The catalysed reaction is all-trans-octaprenyl diphosphate + 4-hydroxybenzoate = 4-hydroxy-3-(all-trans-octaprenyl)benzoate + diphosphate. It functions in the pathway cofactor biosynthesis; ubiquinone biosynthesis. In terms of biological role, catalyzes the prenylation of para-hydroxybenzoate (PHB) with an all-trans polyprenyl group. Mediates the second step in the final reaction sequence of ubiquinone-8 (UQ-8) biosynthesis, which is the condensation of the polyisoprenoid side chain with PHB, generating the first membrane-bound Q intermediate 3-octaprenyl-4-hydroxybenzoate. The protein is 4-hydroxybenzoate octaprenyltransferase of Paraburkholderia phytofirmans (strain DSM 17436 / LMG 22146 / PsJN) (Burkholderia phytofirmans).